A 420-amino-acid chain; its full sequence is Glucose-1-phosphate adenylyltransferase (420 aa).

Alpha-D-glucose 1-phosphate is bound by residues tyrosine 107, glycine 173, 188-189 (EK), and serine 206.

This sequence belongs to the bacterial/plant glucose-1-phosphate adenylyltransferase family. Homotetramer.

The enzyme catalyses alpha-D-glucose 1-phosphate + ATP + H(+) = ADP-alpha-D-glucose + diphosphate. It functions in the pathway glycan biosynthesis; glycogen biosynthesis. Its function is as follows. Involved in the biosynthesis of ADP-glucose, a building block required for the elongation reactions to produce glycogen. Catalyzes the reaction between ATP and alpha-D-glucose 1-phosphate (G1P) to produce pyrophosphate and ADP-Glc. This Shewanella baltica (strain OS185) protein is Glucose-1-phosphate adenylyltransferase.